A 152-amino-acid polypeptide reads, in one-letter code: Small ribosomal subunit protein bS6 (152 aa).

The disordered stretch occupies residues 96–152 (HEEGPSAMLQKRDRDDRGPREGGDRGPRREFGDRPPRRDGDFQRGPRPDRAPREDRA).

This sequence belongs to the bacterial ribosomal protein bS6 family.

In terms of biological role, binds together with bS18 to 16S ribosomal RNA. In Rhizobium etli (strain CIAT 652), this protein is Small ribosomal subunit protein bS6.